The primary structure comprises 75 residues: Conotoxin Vc6.15 (75 aa).

Positions 1–19 (MEKLTILLHVAAVLMSTQA) are cleaved as a signal peptide. Positions 20 to 41 (LIQEQRQKAKINLFSKRKPSAE) are excised as a propeptide. 3 cysteine pairs are disulfide-bonded: C49-C62, C55-C66, and C61-C71.

This sequence belongs to the conotoxin O2 superfamily. In terms of tissue distribution, expressed by the venom duct.

The protein localises to the secreted. Its function is as follows. Inhibits voltage-gated ion channels. This is Conotoxin Vc6.15 from Conus victoriae (Queen Victoria cone).